The sequence spans 359 residues: uncharacterized protein (359 aa).

6 consecutive transmembrane segments (helical) span residues 4 to 24 (ELFV…HLFK), 36 to 56 (FQAV…VFGF), 68 to 88 (IPIM…ALAM), 94 to 114 (LLIT…IAAI), 129 to 149 (HAFY…YFLI), and 155 to 175 (ELHL…LYII). In terms of domain architecture, GGDEF spans 223–357 (FQFALIYMDI…GRNRVCFSEK (135 aa)).

The protein localises to the cell membrane. This is an uncharacterized protein from Bacillus subtilis (strain 168).